The primary structure comprises 84 residues: Small ribosomal subunit protein uS17 (84 aa).

Belongs to the universal ribosomal protein uS17 family. Part of the 30S ribosomal subunit.

In terms of biological role, one of the primary rRNA binding proteins, it binds specifically to the 5'-end of 16S ribosomal RNA. In Photorhabdus laumondii subsp. laumondii (strain DSM 15139 / CIP 105565 / TT01) (Photorhabdus luminescens subsp. laumondii), this protein is Small ribosomal subunit protein uS17.